Here is a 1366-residue protein sequence, read N- to C-terminus: DNA-directed RNA polymerase subunit beta'' (1366 aa).

Zn(2+)-binding residues include Cys-220, Cys-290, Cys-297, and Cys-300.

Belongs to the RNA polymerase beta' chain family. RpoC2 subfamily. As to quaternary structure, in plastids the minimal PEP RNA polymerase catalytic core is composed of four subunits: alpha, beta, beta', and beta''. When a (nuclear-encoded) sigma factor is associated with the core the holoenzyme is formed, which can initiate transcription. Zn(2+) serves as cofactor.

It is found in the plastid. The protein localises to the chloroplast. It carries out the reaction RNA(n) + a ribonucleoside 5'-triphosphate = RNA(n+1) + diphosphate. In terms of biological role, DNA-dependent RNA polymerase catalyzes the transcription of DNA into RNA using the four ribonucleoside triphosphates as substrates. The chain is DNA-directed RNA polymerase subunit beta'' from Lemna minor (Common duckweed).